We begin with the raw amino-acid sequence, 83 residues long: Exodeoxyribonuclease 7 small subunit (83 aa).

The protein belongs to the XseB family. As to quaternary structure, heterooligomer composed of large and small subunits.

It localises to the cytoplasm. The catalysed reaction is Exonucleolytic cleavage in either 5'- to 3'- or 3'- to 5'-direction to yield nucleoside 5'-phosphates.. In terms of biological role, bidirectionally degrades single-stranded DNA into large acid-insoluble oligonucleotides, which are then degraded further into small acid-soluble oligonucleotides. The polypeptide is Exodeoxyribonuclease 7 small subunit (Rhodopseudomonas palustris (strain HaA2)).